The primary structure comprises 175 residues: CASP-like protein 2C1 (175 aa).

The Cytoplasmic portion of the chain corresponds to 1 to 7 (MVRLRET). Residues 8 to 28 (EVILRLCIVFFILLSSCLIGL) form a helical membrane-spanning segment. Topologically, residues 29-51 (DSQTKEIAYIHKKVSFRYLLALE) are extracellular. The helical transmembrane segment at 52–72 (AELYINVVVAAYNLVQIGLGW) threads the bilayer. At 73 to 91 (YNVEQKTSNPKWFSYLLDQ) the chain is on the cytoplasmic side. A helical transmembrane segment spans residues 92 to 112 (TAAYVVFAGTSAAAQHSLLVV). Residues 113–136 (TGSRELQWMKWCYKFTRFCFQMGS) lie on the Extracellular side of the membrane. Residues 137-157 (AIILNYIAAALMVLLSSISAF) form a helical membrane-spanning segment. Over 158–175 (NLFRLYSPKRFFSFKSSS) the chain is Cytoplasmic.

Belongs to the Casparian strip membrane proteins (CASP) family. Homodimer and heterodimers.

It localises to the cell membrane. In Arabidopsis lyrata subsp. lyrata (Lyre-leaved rock-cress), this protein is CASP-like protein 2C1.